An 802-amino-acid chain; its full sequence is uncharacterized protein (802 aa).

The EF-hand 1 domain occupies serine 6 to arginine 41. TPR repeat units lie at residues phenylalanine 229–aspartate 262, arginine 264–glycine 296, proline 305–histidine 338, tyrosine 339–tyrosine 372, alanine 373–histidine 406, valine 407–histidine 440, and arginine 442–valine 474. Residues alanine 595–glycine 630 form the EF-hand 2 domain.

This is an uncharacterized protein from Arabidopsis thaliana (Mouse-ear cress).